The primary structure comprises 39 residues: Ribonuclease UK114 (39 aa).

This sequence belongs to the RutC family. Monomer. The N-terminus may be blocked. Mainly expressed in the liver and kidney. Lower expression found in intestine, gizzard, glandular stomach, heart, brain and spleen.

Its subcellular location is the cytoplasm. Functionally, endoribonuclease responsible for the inhibition of the translation by cleaving mRNA. Inhibits cell-free protein synthesis. Cleaves phosphodiester bonds only in single-stranded RNA. This is Ribonuclease UK114 from Gallus gallus (Chicken).